We begin with the raw amino-acid sequence, 201 residues long: Putative 3-methyladenine DNA glycosylase (201 aa).

This sequence belongs to the DNA glycosylase MPG family.

The polypeptide is Putative 3-methyladenine DNA glycosylase (Nitrosococcus oceani (strain ATCC 19707 / BCRC 17464 / JCM 30415 / NCIMB 11848 / C-107)).